The primary structure comprises 359 residues: 3-dehydroquinate synthase (359 aa).

Residues 71-76 (DGEQFK), 105-109 (GVIGD), 129-130 (TT), Lys-142, Lys-151, and 169-172 (CLHT) each bind NAD(+). Positions 184, 247, and 264 each coordinate Zn(2+).

The protein belongs to the sugar phosphate cyclases superfamily. Dehydroquinate synthase family. Requires Co(2+) as cofactor. Zn(2+) is required as a cofactor. It depends on NAD(+) as a cofactor.

It is found in the cytoplasm. It carries out the reaction 7-phospho-2-dehydro-3-deoxy-D-arabino-heptonate = 3-dehydroquinate + phosphate. It functions in the pathway metabolic intermediate biosynthesis; chorismate biosynthesis; chorismate from D-erythrose 4-phosphate and phosphoenolpyruvate: step 2/7. Functionally, catalyzes the conversion of 3-deoxy-D-arabino-heptulosonate 7-phosphate (DAHP) to dehydroquinate (DHQ). The protein is 3-dehydroquinate synthase of Shewanella putrefaciens (strain CN-32 / ATCC BAA-453).